A 779-amino-acid polypeptide reads, in one-letter code: GATOR2 complex protein WDR24 (779 aa).

WD repeat units lie at residues 66 to 106, 112 to 152, 155 to 195, 199 to 239, 243 to 285, and 289 to 332; these read SLNF…RNKQ, EHKR…SVST, GQSE…RYER, AHTG…VKEI, QTFA…IPFA, and EHKD…VDRA. Disordered regions lie at residues 506–526 and 570–590; these read LETN…EGQA and DHPS…VSGS. The C4-type zinc finger occupies 707–729; that stretch reads NCSNCKRPMSNKGWICDRCHQCA. C708, C711, C722, C725, C732, C735, C746, C749, H751, H754, H757, C768, C772, H774, and C776 together coordinate Zn(2+). An RING-type; atypical zinc finger spans residues 730 to 779; the sequence is SVCAVCHHVVKGLFVWCQGCSHGGHLEHVMEWLKQSKHCPAGCGHLCEYT.

It belongs to the WD repeat WDR24 family. In terms of assembly, component of the GATOR2 subcomplex, composed of MIOS, SEC13, SEH1L, WDR24 and WDR59. The GATOR2 complex interacts with CASTOR1 and CASTOR2; the interaction is negatively regulated by arginine. The GATOR2 complex interacts with SESN1, SESN2 and SESN3; the interaction is negatively regulated by amino acids.

It localises to the lysosome membrane. The enzyme catalyses S-ubiquitinyl-[E2 ubiquitin-conjugating enzyme]-L-cysteine + [acceptor protein]-L-lysine = [E2 ubiquitin-conjugating enzyme]-L-cysteine + N(6)-ubiquitinyl-[acceptor protein]-L-lysine.. It participates in protein modification; protein ubiquitination. With respect to regulation, the GATOR2 complex is negatively regulated by the upstream amino acid sensors CASTOR1 and SESN2, which sequester the GATOR2 complex in absence of amino acids. In the presence of abundant amino acids, GATOR2 is released from CASTOR1 and SESN2 and activated. Catalytic component of the GATOR2 complex, a multiprotein complex that acts as an activator of the amino acid-sensing branch of the mTORC1 signaling pathway. The GATOR2 complex indirectly activates mTORC1 through the inhibition of the GATOR1 subcomplex. GATOR2 probably acts as an E3 ubiquitin-protein ligase toward GATOR1. In the presence of abundant amino acids, the GATOR2 complex mediates ubiquitination of the NPRL2 core component of the GATOR1 complex, leading to GATOR1 inactivation. In the absence of amino acids, GATOR2 is inhibited, activating the GATOR1 complex. In addition to its role in regulation of the mTORC1 complex, promotes the acidification of lysosomes and facilitates autophagic flux. Within the GATOR2 complex, WDR24 constitutes the catalytic subunit that mediates 'Lys-6'-linked ubiquitination of NPRL2. The protein is GATOR2 complex protein WDR24 of Danio rerio (Zebrafish).